We begin with the raw amino-acid sequence, 396 residues long: Elongation factor Tu (396 aa).

Residues 10–206 enclose the tr-type G domain; that stretch reads KPHVNVGTIG…TMDSYIPEPV (197 aa). A G1 region spans residues 19–26; sequence GHVDHGKT. Residue 19-26 participates in GTP binding; sequence GHVDHGKT. Thr-26 contributes to the Mg(2+) binding site. The interval 60–64 is G2; the sequence is GITIS. Residues 81-84 are G3; that stretch reads DCPG. GTP-binding positions include 81 to 85 and 136 to 139; these read DCPGH and NKAD. Positions 136 to 139 are G4; sequence NKAD. The segment at 174-176 is G5; it reads SAL.

Belongs to the TRAFAC class translation factor GTPase superfamily. Classic translation factor GTPase family. EF-Tu/EF-1A subfamily. In terms of assembly, monomer.

It localises to the cytoplasm. The catalysed reaction is GTP + H2O = GDP + phosphate + H(+). Its function is as follows. GTP hydrolase that promotes the GTP-dependent binding of aminoacyl-tRNA to the A-site of ribosomes during protein biosynthesis. The protein is Elongation factor Tu of Legionella pneumophila (strain Paris).